The following is a 456-amino-acid chain: Probable glycine dehydrogenase (decarboxylating) subunit 1 (456 aa).

The protein belongs to the GcvP family. N-terminal subunit subfamily. The glycine cleavage system is composed of four proteins: P, T, L and H. In this organism, the P 'protein' is a heterodimer of two subunits.

The catalysed reaction is N(6)-[(R)-lipoyl]-L-lysyl-[glycine-cleavage complex H protein] + glycine + H(+) = N(6)-[(R)-S(8)-aminomethyldihydrolipoyl]-L-lysyl-[glycine-cleavage complex H protein] + CO2. Functionally, the glycine cleavage system catalyzes the degradation of glycine. The P protein binds the alpha-amino group of glycine through its pyridoxal phosphate cofactor; CO(2) is released and the remaining methylamine moiety is then transferred to the lipoamide cofactor of the H protein. This Rhizorhabdus wittichii (strain DSM 6014 / CCUG 31198 / JCM 15750 / NBRC 105917 / EY 4224 / RW1) (Sphingomonas wittichii) protein is Probable glycine dehydrogenase (decarboxylating) subunit 1.